A 221-amino-acid chain; its full sequence is Glycerol metabolism activator (221 aa).

The 118-residue stretch at 3–120 (KILIADDHPL…QMTDAIEQIL (118 aa)) folds into the Response regulatory domain. Aspartate 55 is modified (4-aspartylphosphate). Residues 149 to 214 (APELLQALTR…QAILSAGDID (66 aa)) form the HTH luxR-type domain. Residues 173–192 (NKQIAYNLDIAETTVKAHVS) constitute a DNA-binding region (H-T-H motif).

In terms of biological role, positive activator for glycerol metabolism. Regulates the expression of qedA in a positive manner and governs the expression of ADH I and ADH IIB. General regulator of quinoprotein ethanol oxidation and affects expression of ADH IIG activity but is not the sole regulator. This is Glycerol metabolism activator from Pseudomonas putida (Arthrobacter siderocapsulatus).